A 149-amino-acid polypeptide reads, in one-letter code: L-alanine exporter AlaE (149 aa).

4 consecutive transmembrane segments (helical) span residues 16-36 (FAMVVYCSVVNMLIEIFLSGM), 46-66 (LVAIPVNILIAWPYGVYRDLI), 85-105 (VLAYVTFQSPVYIIILLTVGA), and 112-132 (AAVSSNIVVSMLMGAVYGYFL).

Belongs to the AlaE exporter family.

The protein resides in the cell inner membrane. Exports L-alanine. The protein is L-alanine exporter AlaE of Salmonella arizonae (strain ATCC BAA-731 / CDC346-86 / RSK2980).